We begin with the raw amino-acid sequence, 329 residues long: Beta-1,3-galactosyltransferase 6 (329 aa).

At 1 to 11 (MKLLRRAWRRR) the chain is on the cytoplasmic side. The helical; Signal-anchor for type II membrane protein transmembrane segment at 12-34 (AALGLGTLALCGAALLYLARCAA) threads the bilayer. The Lumenal segment spans residues 35-329 (EPGDPRAMSG…QCCQRREGIP (295 aa)). N131 carries N-linked (GlcNAc...) asparagine glycosylation.

It belongs to the glycosyltransferase 31 family. The cofactor is Mn(2+). Ubiquitous.

It localises to the golgi apparatus. The protein resides in the golgi stack membrane. The enzyme catalyses 3-O-(beta-D-galactosyl-(1-&gt;4)-beta-D-xylosyl)-L-seryl-[protein] + UDP-alpha-D-galactose = 3-O-(beta-D-galactosyl-(1-&gt;3)-beta-D-galactosyl-(1-&gt;4)-beta-D-xylosyl)-L-seryl-[protein] + UDP + H(+). It functions in the pathway glycan metabolism; chondroitin sulfate biosynthesis. The protein operates within glycan metabolism; heparan sulfate biosynthesis. Its function is as follows. Beta-1,3-galactosyltransferase that transfers galactose from UDP-galactose to substrates with a terminal beta-linked galactose residue. Has a preference for galactose-beta-1,4-xylose that is found in the linker region of glycosaminoglycans, such as heparan sulfate and chondroitin sulfate. Has no activity towards substrates with terminal glucosamine or galactosamine residues. The chain is Beta-1,3-galactosyltransferase 6 (B3GALT6) from Homo sapiens (Human).